A 335-amino-acid polypeptide reads, in one-letter code: RNA polymerase sigma factor RpoS (335 aa).

Residues 57–90 (DATQMYLSEIGFSPLLTAEEEVLYARRALRGDEA) form a sigma-70 factor domain-1 region. The interval 95-165 (MIESNLRLVV…ERALMNQTRT (71 aa)) is sigma-70 factor domain-2. Residues 119-122 (DLIE) carry the Interaction with polymerase core subunit RpoC motif. Positions 175-250 (ELNIYLRTAR…DSHNADPEFS (76 aa)) are sigma-70 factor domain-3. A sigma-70 factor domain-4 region spans residues 263–316 (WLDELNPKQKEVLARRFGLLGYEPSTLEEVGREINLTRERVRQIQVEGLRRLRE). A DNA-binding region (H-T-H motif) is located at residues 289 to 308 (LEEVGREINLTRERVRQIQV).

It belongs to the sigma-70 factor family. RpoS subfamily. Interacts with the RNA polymerase core enzyme.

It localises to the cytoplasm. Functionally, sigma factors are initiation factors that promote the attachment of RNA polymerase to specific initiation sites and are then released. This sigma factor is the master transcriptional regulator of the stationary phase and the general stress response. May be required for the persistence of V.cholerae in aquatic habitats. The sequence is that of RNA polymerase sigma factor RpoS from Vibrio cholerae serotype O1 (strain ATCC 39315 / El Tor Inaba N16961).